Here is a 322-residue protein sequence, read N- to C-terminus: ATP-dependent 6-phosphofructokinase (322 aa).

Residue Gly-11 participates in ATP binding. 21–25 (RAVAR) lines the ADP pocket. ATP contacts are provided by residues 72-73 (RY) and 102-105 (GDGS). Asp-103 contributes to the Mg(2+) binding site. 125 to 127 (TID) provides a ligand contact to substrate. Asp-127 (proton acceptor) is an active-site residue. Arg-154 serves as a coordination point for ADP. Substrate-binding positions include Arg-162 and 169–171 (MGR). ADP contacts are provided by residues 185-187 (GAD) and 213-215 (KDY). Residues Glu-222, Arg-246, and 252–255 (HVQR) contribute to the substrate site.

It belongs to the phosphofructokinase type A (PFKA) family. ATP-dependent PFK group I subfamily. Prokaryotic clade 'B1' sub-subfamily. In terms of assembly, homotetramer. The cofactor is Mg(2+).

The protein resides in the cytoplasm. The catalysed reaction is beta-D-fructose 6-phosphate + ATP = beta-D-fructose 1,6-bisphosphate + ADP + H(+). It participates in carbohydrate degradation; glycolysis; D-glyceraldehyde 3-phosphate and glycerone phosphate from D-glucose: step 3/4. With respect to regulation, allosterically activated by ADP and other diphosphonucleosides, and allosterically inhibited by phosphoenolpyruvate. Functionally, catalyzes the phosphorylation of D-fructose 6-phosphate to fructose 1,6-bisphosphate by ATP, the first committing step of glycolysis. The sequence is that of ATP-dependent 6-phosphofructokinase from Pediococcus pentosaceus (strain ATCC 25745 / CCUG 21536 / LMG 10740 / 183-1w).